The following is a 454-amino-acid chain: Gustatory and odorant receptor 21a (454 aa).

Topologically, residues 1–114 are cytoplasmic; sequence MTFLDRTMSF…LPRTGYSWGS (114 aa). A helical transmembrane segment spans residues 115-135; sequence KQVMWAIFIYSCQTTIVVLVL. The Extracellular portion of the chain corresponds to 136 to 153; the sequence is RERVKKFVTSPDKRFDEA. Residues 154–174 form a helical membrane-spanning segment; it reads IYNVIFISLLFTNFLLPVASW. Topologically, residues 175-206 are cytoplasmic; that stretch reads RHGPQVAIFKNMWTNYQYKFFKTTGSPIVFPN. The chain crosses the membrane as a helical span at residues 207 to 227; it reads LYPLTWSLCVFSWLLSIAINL. Topologically, residues 228–237 are extracellular; sequence SQYFLQPDFR. The helical transmembrane segment at 238-258 threads the bilayer; the sequence is LWYTFAYYPIIAMLNCFCSLW. Topologically, residues 259-312 are cytoplasmic; sequence YINCNAFGTASRALSDALQTTIRGEKPAQKLTEYRHLWVDLSHMMQQLGRAYSN. Residues 313-333 form a helical membrane-spanning segment; the sequence is MYGMYCLVIFFTTIIATYGSI. Residues 334–345 are Extracellular-facing; the sequence is SEIIDHGATYKE. A helical transmembrane segment spans residues 346 to 366; sequence VGLFVIVFYCMGLLYIICNEA. The Cytoplasmic segment spans residues 367–422; the sequence is HYASRKVGLDFQTKLLNINLTAVDAATQKEVEMLLVAINKNPPIMNLDGYANINRE. A helical transmembrane segment spans residues 423-443; it reads LITTNISFMATYLVVLLQFKI. Residues 444–454 are Extracellular-facing; sequence TEQRRIGQQQA.

Belongs to the insect chemoreceptor superfamily. Gustatory receptor (GR) family. Gr21a subfamily. Gr21a and Gr63a probably form a heterodimer that responds to CO(2). Expressed in the adult labellar chemosensory neurons. Carbon dioxide-responsive neurons coexpress Gr21a and Gr63a in a pair of chemosensory receptors at both larval and adult life stages. A single bilateral neuron, expressing the Gr21a receptor, is responsible for CO(2) detection in larvae.

It localises to the cell membrane. Functionally, gustatory and odorant receptor which mediates acceptance or avoidance behavior, depending on its substrates. Gr21a and Gr63a together are sufficient for carbon dioxide detection and avoidance behavior. It is possible that the CO(2) receptors Gr63a and Gr21a activate the TRPC channels through Galpha49B and Plc21C. This innate olfactory avoidance behavior can be inhibited by inhibitory interactions of the odors such as 1-hexanol and 2,3-butanedione with Gr21a and Gr63a. In Drosophila melanogaster (Fruit fly), this protein is Gustatory and odorant receptor 21a (Gr21a).